Here is a 155-residue protein sequence, read N- to C-terminus: 6,7-dimethyl-8-ribityllumazine synthase (155 aa).

5-amino-6-(D-ribitylamino)uracil-binding positions include Phe24, 58-60 (AFE), and 82-84 (AII). 87–88 (ST) is a (2S)-2-hydroxy-3-oxobutyl phosphate binding site. His90 functions as the Proton donor in the catalytic mechanism. Phe115 lines the 5-amino-6-(D-ribitylamino)uracil pocket. Arg129 is a binding site for (2S)-2-hydroxy-3-oxobutyl phosphate.

The protein belongs to the DMRL synthase family.

The catalysed reaction is (2S)-2-hydroxy-3-oxobutyl phosphate + 5-amino-6-(D-ribitylamino)uracil = 6,7-dimethyl-8-(1-D-ribityl)lumazine + phosphate + 2 H2O + H(+). Its pathway is cofactor biosynthesis; riboflavin biosynthesis; riboflavin from 2-hydroxy-3-oxobutyl phosphate and 5-amino-6-(D-ribitylamino)uracil: step 1/2. Its function is as follows. Catalyzes the formation of 6,7-dimethyl-8-ribityllumazine by condensation of 5-amino-6-(D-ribitylamino)uracil with 3,4-dihydroxy-2-butanone 4-phosphate. This is the penultimate step in the biosynthesis of riboflavin. This chain is 6,7-dimethyl-8-ribityllumazine synthase, found in Chlorobium phaeovibrioides (strain DSM 265 / 1930) (Prosthecochloris vibrioformis (strain DSM 265)).